Here is a 264-residue protein sequence, read N- to C-terminus: Indolethylamine N-methyltransferase (264 aa).

Lysine 14 carries the N6-succinyllysine modification. Residues tyrosine 21, tyrosine 26, 64 to 65 (GS), tyrosine 70, aspartate 86, and asparagine 91 each bind S-adenosyl-L-methionine. Residue lysine 97 is modified to N6-succinyllysine. S-adenosyl-L-methionine contacts are provided by residues 143–144 (DV) and phenylalanine 164.

It belongs to the class I-like SAM-binding methyltransferase superfamily. NNMT/PNMT/TEMT family. In terms of assembly, monomer. As to expression, detected in lung and liver (at protein level).

The protein localises to the cytoplasm. It catalyses the reaction a tertiary amine + S-adenosyl-L-methionine = a methylated tertiary amine + S-adenosyl-L-homocysteine + H(+). The catalysed reaction is a secondary amine + S-adenosyl-L-methionine = a methylated secondary amine + S-adenosyl-L-homocysteine + H(+). The enzyme catalyses a primary amine + S-adenosyl-L-methionine = a methylated primary amine + S-adenosyl-L-homocysteine + H(+). It carries out the reaction dimethyl sulfide + S-adenosyl-L-methionine = trimethylsulfonium + S-adenosyl-L-homocysteine. With respect to regulation, inhibited by the S-adenosyl-L-methionine analog sinefungin and by the product S-adenosyl-L-homocysteine. Catalyzes the N-methylation of tryptamine and structurally related compounds. Functions as a thioether S-methyltransferase and is active with a variety of thioethers and the corresponding selenium and tellurium compounds, including 3-methylthiopropionaldehyde, dimethyl selenide, dimethyl telluride, 2-methylthioethylamine, 2-methylthioethanol, methyl-n-propyl sulfide and diethyl sulfide. Plays an important role in the detoxification of selenium compounds. The protein is Indolethylamine N-methyltransferase (Inmt) of Mus musculus (Mouse).